Reading from the N-terminus, the 497-residue chain is Serine hydroxymethyltransferase (497 aa).

(6S)-5,6,7,8-tetrahydrofolate contacts are provided by residues L176 and 180–182 (GHL). Position 289 is an N6-(pyridoxal phosphate)lysine (K289).

Belongs to the SHMT family. In terms of assembly, homodimer. It depends on pyridoxal 5'-phosphate as a cofactor.

The protein localises to the cytoplasm. The catalysed reaction is (6R)-5,10-methylene-5,6,7,8-tetrahydrofolate + glycine + H2O = (6S)-5,6,7,8-tetrahydrofolate + L-serine. Its pathway is one-carbon metabolism; tetrahydrofolate interconversion. It participates in amino-acid biosynthesis; glycine biosynthesis; glycine from L-serine: step 1/1. Functionally, catalyzes the reversible interconversion of serine and glycine with tetrahydrofolate (THF) serving as the one-carbon carrier. This reaction serves as the major source of one-carbon groups required for the biosynthesis of purines, thymidylate, methionine, and other important biomolecules. Also exhibits THF-independent aldolase activity toward beta-hydroxyamino acids, producing glycine and aldehydes, via a retro-aldol mechanism. The polypeptide is Serine hydroxymethyltransferase (Chlamydia muridarum (strain MoPn / Nigg)).